The chain runs to 444 residues: Pestheic acid cluster transcriptional regulator 2 (444 aa).

Residues 1–22 (MEAADPNNNLTITSPSTLLSNP) show a composition bias toward polar residues. The tract at residues 1–31 (MEAADPNNNLTITSPSTLLSNPTQPPAQPLK) is disordered. Positions 36–63 (CHACASSKVKCHKEKPTCSRCRKRGITC) form a DNA-binding region, zn(2)-C6 fungal-type. The disordered stretch occupies residues 326 to 348 (ARVGSGVSTHTTAGQYEPQVEQQ). Residues 331–348 (GVSTHTTAGQYEPQVEQQ) show a composition bias toward polar residues.

It is found in the nucleus. Functionally, transcription factor that, with ptaR1 and ptaR3, coregulates the expression of the gene cluster that mediates the biosynthesis of pestheic acid, a diphenyl ether which is a biosynthetic precursor of the unique chloropupukeananes. The protein is Pestheic acid cluster transcriptional regulator 2 of Pestalotiopsis fici (strain W106-1 / CGMCC3.15140).